Consider the following 788-residue polypeptide: Endonuclease MutS2 (788 aa).

332 to 339 (GPNTGGKT) contacts ATP. Residues 713-788 (VDLRGMDAEE…GTGVTVVELK (76 aa)) form the Smr domain.

The protein belongs to the DNA mismatch repair MutS family. MutS2 subfamily. As to quaternary structure, homodimer. Binds to stalled ribosomes, contacting rRNA.

Its function is as follows. Endonuclease that is involved in the suppression of homologous recombination and thus may have a key role in the control of bacterial genetic diversity. Acts as a ribosome collision sensor, splitting the ribosome into its 2 subunits. Detects stalled/collided 70S ribosomes which it binds and splits by an ATP-hydrolysis driven conformational change. Acts upstream of the ribosome quality control system (RQC), a ribosome-associated complex that mediates the extraction of incompletely synthesized nascent chains from stalled ribosomes and their subsequent degradation. Probably generates substrates for RQC. This Clostridium botulinum (strain ATCC 19397 / Type A) protein is Endonuclease MutS2.